The following is a 234-amino-acid chain: Ribose-5-phosphate isomerase A (234 aa).

Substrate-binding positions include 34–37 (TGST), 90–93 (DGAD), and 103–106 (KGGG). Residue Glu112 is the Proton acceptor of the active site. Lys130 contacts substrate.

It belongs to the ribose 5-phosphate isomerase family. As to quaternary structure, homodimer.

It catalyses the reaction aldehydo-D-ribose 5-phosphate = D-ribulose 5-phosphate. It functions in the pathway carbohydrate degradation; pentose phosphate pathway; D-ribose 5-phosphate from D-ribulose 5-phosphate (non-oxidative stage): step 1/1. Its function is as follows. Catalyzes the reversible conversion of ribose-5-phosphate to ribulose 5-phosphate. The chain is Ribose-5-phosphate isomerase A from Methanosarcina acetivorans (strain ATCC 35395 / DSM 2834 / JCM 12185 / C2A).